The sequence spans 238 residues: Large ribosomal subunit protein uL1 (238 aa).

This sequence belongs to the universal ribosomal protein uL1 family. In terms of assembly, part of the 50S ribosomal subunit.

Functionally, binds directly to 23S rRNA. The L1 stalk is quite mobile in the ribosome, and is involved in E site tRNA release. Its function is as follows. Protein L1 is also a translational repressor protein, it controls the translation of the L11 operon by binding to its mRNA. This is Large ribosomal subunit protein uL1 from Picosynechococcus sp. (strain ATCC 27264 / PCC 7002 / PR-6) (Agmenellum quadruplicatum).